Consider the following 480-residue polypeptide: UDP-glucose 6-dehydrogenase 3 (480 aa).

NAD(+) is bound by residues G8–G13, D33, R38, V86–T90, S127–T128, and E161. Substrate-binding positions include E157–E161, K216–L223, and R256–G269. The Nucleophile role is filled by C272. Position 272 to 275 (C272 to K275) interacts with NAD(+). Substrate is bound at residue F334–K335. R342 is an NAD(+) binding site. At S393 the chain carries Phosphoserine. R447 serves as a coordination point for substrate.

It belongs to the UDP-glucose/GDP-mannose dehydrogenase family.

It catalyses the reaction UDP-alpha-D-glucose + 2 NAD(+) + H2O = UDP-alpha-D-glucuronate + 2 NADH + 3 H(+). Its pathway is nucleotide-sugar biosynthesis; UDP-alpha-D-glucuronate biosynthesis; UDP-alpha-D-glucuronate from UDP-alpha-D-glucose: step 1/1. Its function is as follows. Involved in the biosynthesis of UDP-glucuronic acid (UDP-GlcA), providing nucleotide sugars for cell-wall polymers. The chain is UDP-glucose 6-dehydrogenase 3 (UGD3) from Oryza sativa subsp. japonica (Rice).